A 436-amino-acid polypeptide reads, in one-letter code: Na(+)/H(+) antiporter NhaA 1 (436 aa).

The next 11 helical transmembrane spans lie at 35 to 55, 80 to 100, 116 to 136, 147 to 167, 176 to 196, 201 to 221, 226 to 246, 283 to 303, 313 to 333, 354 to 374, and 385 to 405; these read FGGG…NSPW, LATW…GLEL, ALPV…YVGV, GWAI…AVIG, AFLL…IAIF, FKLT…LLVQ, WWWA…ESGV, VSAG…SLRG, PIVV…IFGS, LLGV…IGEL, and VKAA…IVLI.

It belongs to the NhaA Na(+)/H(+) (TC 2.A.33) antiporter family.

It localises to the cell membrane. The catalysed reaction is Na(+)(in) + 2 H(+)(out) = Na(+)(out) + 2 H(+)(in). Na(+)/H(+) antiporter that extrudes sodium in exchange for external protons. This is Na(+)/H(+) antiporter NhaA 1 from Salinispora tropica (strain ATCC BAA-916 / DSM 44818 / JCM 13857 / NBRC 105044 / CNB-440).